The sequence spans 206 residues: Small ribosomal subunit protein uS4 (206 aa).

The S4 RNA-binding domain occupies Cys-96 to Val-156.

This sequence belongs to the universal ribosomal protein uS4 family. As to quaternary structure, part of the 30S ribosomal subunit. Contacts protein S5. The interaction surface between S4 and S5 is involved in control of translational fidelity.

Its function is as follows. One of the primary rRNA binding proteins, it binds directly to 16S rRNA where it nucleates assembly of the body of the 30S subunit. In terms of biological role, with S5 and S12 plays an important role in translational accuracy. The polypeptide is Small ribosomal subunit protein uS4 (Pseudomonas fluorescens (strain SBW25)).